The primary structure comprises 242 residues: Small ribosomal subunit protein uS2 (242 aa).

It belongs to the universal ribosomal protein uS2 family.

This Shewanella loihica (strain ATCC BAA-1088 / PV-4) protein is Small ribosomal subunit protein uS2.